A 116-amino-acid chain; its full sequence is MAAVLTFRRLLTLPRAARGFGVQVSPSGEKITHTGQVYDEKDYRRVRFVDRQKEVNENFAIDLIAQQPVNEVEHRIIACDGGGGALGHPKVYINLDKETKTGTCGYCGLQFKQHHH.

Residues 1–20 (MAAVLTFRRLLTLPRAARGF) constitute a mitochondrion transit peptide. N6-acetyllysine occurs at positions 90 and 112.

Belongs to the complex I NDUFS6 subunit family. As to quaternary structure, mammalian complex I is composed of 45 different subunits. This is a component of the iron-sulfur (IP) fragment of the enzyme.

The protein localises to the mitochondrion inner membrane. Accessory subunit of the mitochondrial membrane respiratory chain NADH dehydrogenase (Complex I), that is believed not to be involved in catalysis. Complex I functions in the transfer of electrons from NADH to the respiratory chain. The immediate electron acceptor for the enzyme is believed to be ubiquinone. The sequence is that of NADH dehydrogenase [ubiquinone] iron-sulfur protein 6, mitochondrial (Ndufs6) from Mus musculus (Mouse).